We begin with the raw amino-acid sequence, 749 residues long: Cytosolic phospholipase A2 (749 aa).

Residues 1 to 178 (MSFIDPYQHI…MKKLLGPKNS (178 aa)) are phospholipid binding. The residue at position 2 (S2) is a Phosphoserine. A C2 domain is found at 6-122 (PYQHIIVEHQ…KVGEKKEVPF (117 aa)). D40, T41, D43, N65, D93, A94, and N95 together coordinate Ca(2+). Residues 140 to 740 (SCPDLRFSMA…SNVEARRFFN (601 aa)) enclose the PLA2c domain. Residue S228 is the Nucleophile of the active site. T268 is subject to Phosphothreonine. Residues 409–457 (GSQSRGSTMEEELENITTKHIVSNDSSDSDDESHEPKGTENEDAGSDYQ) are disordered. A phosphoserine mark is found at S434, S435, and S437. S505 carries the phosphoserine; by MAPK modification. A Phosphoserine modification is found at S515. K541 is covalently cross-linked (Glycyl lysine isopeptide (Lys-Gly) (interchain with G-Cter in SUMO2)). Residue D549 is the Proton acceptor of the active site. Residue K606 forms a Glycyl lysine isopeptide (Lys-Gly) (interchain with G-Cter in SUMO2) linkage. A phosphoserine mark is found at S727 and S729.

As to quaternary structure, interacts with KAT5. Post-translationally, phosphorylated at both Ser-505 and Ser-727 in response to mitogenic stimuli.

It is found in the cytoplasm. The protein localises to the golgi apparatus membrane. The protein resides in the nucleus envelope. The enzyme catalyses a 1,2-diacyl-sn-glycero-3-phosphocholine + H2O = a 1-acyl-sn-glycero-3-phosphocholine + a fatty acid + H(+). It carries out the reaction a 1-O-alkyl-2-acyl-sn-glycero-3-phosphocholine + H2O = a 1-O-alkyl-sn-glycero-3-phosphocholine + a fatty acid + H(+). It catalyses the reaction a 1-acyl-sn-glycero-3-phosphocholine + H2O = sn-glycerol 3-phosphocholine + a fatty acid + H(+). The catalysed reaction is 1-hexadecanoyl-2-(5Z,8Z,11Z,14Z-eicosatetraenoyl)-sn-glycero-3-phosphocholine + H2O = 1-hexadecanoyl-sn-glycero-3-phosphocholine + (5Z,8Z,11Z,14Z)-eicosatetraenoate + H(+). The enzyme catalyses 1,2-di-(5Z,8Z,11Z,14Z-eicosatetraenoyl)-sn-glycero-3-phosphocholine + H2O = 1-(5Z,8Z,11Z,14Z-eicosatetraenoyl)-sn-glycero-3-phosphocholine + (5Z,8Z,11Z,14Z)-eicosatetraenoate + H(+). It carries out the reaction 1-octadecanoyl-2-(5Z,8Z,11Z,14Z-eicosatetraenoyl)-sn-glycero-3-phosphocholine + H2O = 1-octadecanoyl-sn-glycero-3-phosphocholine + (5Z,8Z,11Z,14Z)-eicosatetraenoate + H(+). It catalyses the reaction 1-hexadecanoyl-2-(9Z,12Z-octadecadienoyl)-sn-glycero-3-phosphocholine + H2O = (9Z,12Z)-octadecadienoate + 1-hexadecanoyl-sn-glycero-3-phosphocholine + H(+). The catalysed reaction is 1-octadecanoyl-2-(9Z,12Z,15Z-octadecatrienoyl)-sn-glycero-3-phosphocholine + H2O = (9Z,12Z,15Z)-octadecatrienoate + 1-octadecanoyl-sn-glycero-3-phosphocholine + H(+). The enzyme catalyses 1-(5Z,8Z,11Z,14Z-eicosatetraenoyl)-2-hexadecanoyl-sn-glycero-3-phosphocholine + H2O = 1-(5Z,8Z,11Z,14Z-eicosatetraenoyl)-sn-glycero-3-phosphocholine + hexadecanoate + H(+). It carries out the reaction 1-O-hexadecyl-2-(5Z,8Z,11Z,14Z)-eicosatetraenoyl-sn-glycero-3-phosphocholine + H2O = 1-O-hexadecyl-sn-glycero-3-phosphocholine + (5Z,8Z,11Z,14Z)-eicosatetraenoate + H(+). It catalyses the reaction 1,2-di-(9Z-octadecenoyl)-sn-glycero-3-phospho-(1'-sn-glycerol) + H2O = 1-(9Z-octadecenoyl)-sn-glycero-3-phospho-(1'-sn-glycerol) + (9Z)-octadecenoate + H(+). The catalysed reaction is 1-octadecanoyl-2-(5Z,8Z,11Z,14Z-eicosatetraenoyl)-sn-glycero-3-phosphate + H2O = 1-octadecanoyl-sn-glycero-3-phosphate + (5Z,8Z,11Z,14Z)-eicosatetraenoate + H(+). The enzyme catalyses 1-hexadecanoyl-sn-glycero-3-phosphocholine + H2O = sn-glycerol 3-phosphocholine + hexadecanoate + H(+). It carries out the reaction 2-(prostaglandin E2)-sn-glycero-3-phosphoethanolamine + H2O = sn-glycero-3-phosphoethanolamine + prostaglandin E2 + H(+). It catalyses the reaction 2-[(15S)-hydroxy-(5Z,8Z,11Z,13E)-eicosatetraenoyl]-sn-glycero-3-phosphocholine + H2O = (15S)-hydroxy-(5Z,8Z,11Z,13E)-eicosatetraenoate + sn-glycerol 3-phosphocholine + H(+). The catalysed reaction is 2-[(15R)-hydroxy-(5Z,8Z,11Z,13E)-eicosatetraenoyl]-sn-glycero-3-phosphocholine + H2O = (15R)-hydroxy-(5Z,8Z,11Z,13E)-eicosatetraenoate + sn-glycerol 3-phosphocholine + H(+). The enzyme catalyses 2-(prostaglandin E2)-sn-glycero-3-phosphocholine + H2O = prostaglandin E2 + sn-glycerol 3-phosphocholine + H(+). It carries out the reaction 2-[(11R)-hydroxy-(5Z,8Z,12E,14Z)-eicosatetraenoyl]-sn-glycero-3-phosphocholine + H2O = (11R)-hydroxy-(5Z,8Z,12E,14Z)-eicosatetraenoate + sn-glycerol 3-phosphocholine + H(+). It catalyses the reaction 1-(5Z,8Z,11Z,14Z-eicosatetraenoyl)-2-O-hexadecyl-sn-glycero-3-phosphocholine + H2O = 2-O-hexadecyl-sn-glycero-3-phosphocholine + (5Z,8Z,11Z,14Z)-eicosatetraenoate + H(+). The catalysed reaction is 1-octadecanoyl-2-(5Z,8Z,11Z,14Z-eicosatetraenoyl)-sn-glycero-3-phosphocholine + glycerol = 1-(5Z,8Z,11Z,14Z-eicosatetraenoyl)-glycerol + 1-octadecanoyl-sn-glycero-3-phosphocholine. The enzyme catalyses 1-octadecanoyl-2-(9Z,12Z,15Z-octadecatrienoyl)-sn-glycero-3-phosphocholine + glycerol = 1-(9Z,12Z,15Z-octadecatrienoyl)-glycerol + 1-octadecanoyl-sn-glycero-3-phosphocholine. Its pathway is membrane lipid metabolism; glycerophospholipid metabolism. The protein operates within lipid metabolism; arachidonate metabolism. It functions in the pathway lipid metabolism; prostaglandin biosynthesis. It participates in lipid metabolism; leukotriene B4 biosynthesis. With respect to regulation, activated by cytosolic calcium, which is necessary for binding to membrane lipids. Activated by phosphorylation in response to mitogenic stimuli. Functionally, has primarily calcium-dependent phospholipase and lysophospholipase activities, with a major role in membrane lipid remodeling and biosynthesis of lipid mediators of the inflammatory response. Plays an important role in embryo implantation and parturition through its ability to trigger prostanoid production. Preferentially hydrolyzes the ester bond of the fatty acyl group attached at sn-2 position of phospholipids (phospholipase A2 activity). Selectively hydrolyzes sn-2 arachidonoyl group from membrane phospholipids, providing the precursor for eicosanoid biosynthesis via the cyclooxygenase pathway. In an alternative pathway of eicosanoid biosynthesis, hydrolyzes sn-2 fatty acyl chain of eicosanoid lysophopholipids to release free bioactive eicosanoids. Hydrolyzes the ester bond of the fatty acyl group attached at sn-1 position of phospholipids (phospholipase A1 activity) only if an ether linkage rather than an ester linkage is present at the sn-2 position. This hydrolysis is not stereospecific. Has calcium-independent phospholipase A2 and lysophospholipase activities in the presence of phosphoinositides. Has O-acyltransferase activity. Catalyzes the transfer of fatty acyl chains from phospholipids to a primary hydroxyl group of glycerol (sn-1 or sn-3), potentially contributing to monoacylglycerol synthesis. This Pongo abelii (Sumatran orangutan) protein is Cytosolic phospholipase A2 (PLA2G4A).